Reading from the N-terminus, the 227-residue chain is RNA-free ribonuclease P (227 aa).

It belongs to the HARP family.

It carries out the reaction Endonucleolytic cleavage of RNA, removing 5'-extranucleotides from tRNA precursor.. Its function is as follows. RNA-free RNase P that catalyzes the removal of the 5'-leader sequence from pre-tRNA to produce the mature 5'-terminus. The sequence is that of RNA-free ribonuclease P from Archaeoglobus fulgidus (strain ATCC 49558 / DSM 4304 / JCM 9628 / NBRC 100126 / VC-16).